The sequence spans 183 residues: Capsid protein (183 aa).

Positions 143 to 183 (LPETAVVRRRGRSPRRRTPSPRRRRSQSPRRRRSQSPASQC) are disordered. Residues 149 to 176 (VRRRGRSPRRRTPSPRRRRSQSPRRRRS) are compositionally biased toward basic residues. 3 positions are modified to phosphoserine; by host: S155, S162, and S170. A 1; half-length repeat occupies 155–161 (SPRRRTP). A 3 X 8 AA repeats of S-P-R-R-R-[PR]-S-Q region spans residues 155–177 (SPRRRTPSPRRRRSQSPRRRRSQ). Residues 158 to 175 (RRTPSPRRRRSQSPRRRR) carry the Bipartite nuclear localization signal motif. A run of 2 repeats spans residues 162–169 (SPRRRRSQ) and 170–177 (SPRRRRSQ). The segment at 177–183 (QSPASQC) is RNA binding.

It belongs to the orthohepadnavirus core antigen family. In terms of assembly, homodimerizes, then multimerizes. Interacts with cytosol exposed regions of viral L glycoprotein present in the reticulum-to-Golgi compartment. Interacts with human FLNB. Phosphorylated form interacts with host importin alpha; this interaction depends on the exposure of the NLS, which itself depends upon genome maturation and/or phosphorylation of the capsid protein. Interacts with host NUP153. Post-translationally, phosphorylated by host SRPK1, SRPK2, and maybe protein kinase C or GAPDH. Phosphorylation is critical for pregenomic RNA packaging. Protein kinase C phosphorylation is stimulated by HBx protein and may play a role in transport of the viral genome to the nucleus at the late step during the viral replication cycle.

The protein resides in the virion. It is found in the host cytoplasm. Functionally, self assembles to form an icosahedral capsid. Most capsids appear to be large particles with an icosahedral symmetry of T=4 and consist of 240 copies of capsid protein, though a fraction forms smaller T=3 particles consisting of 180 capsid proteins. Entering capsids are transported along microtubules to the nucleus. Phosphorylation of the capsid is thought to induce exposure of nuclear localization signal in the C-terminal portion of the capsid protein that allows binding to the nuclear pore complex via the importin (karyopherin-) alpha and beta. Capsids are imported in intact form through the nuclear pore into the nuclear basket, where it probably binds NUP153. Only capsids that contain the mature viral genome can release the viral DNA and capsid protein into the nucleoplasm. Immature capsids get stuck in the basket. Capsids encapsulate the pre-genomic RNA and the P protein. Pre-genomic RNA is reverse-transcribed into DNA while the capsid is still in the cytoplasm. The capsid can then either be directed to the nucleus, providing more genomes for transcription, or bud through the endoplasmic reticulum to provide new virions. The polypeptide is Capsid protein (Gorilla gorilla (western gorilla)).